Consider the following 83-residue polypeptide: Mitochondrial import inner membrane translocase subunit Tim8 B (83 aa).

N-acetylalanine is present on A2. A Twin CX3C motif motif is present at residues 36–59 (CWDKCVEKPGNRLDSRTENCLSSC). 2 disulfide bridges follow: C36-C59 and C40-C55.

It belongs to the small Tim family. Heterohexamer; possibly composed of 3 copies of TIMM8B and 3 copies of TIMM13, named soluble 70 kDa complex. Associates with the TIM22 complex, whose core is composed of TIMM22. As to expression, ubiquitous, with highest expression in heart, kidney, liver and skeletal muscle.

Its subcellular location is the mitochondrion inner membrane. Functionally, probable mitochondrial intermembrane chaperone that participates in the import and insertion of some multi-pass transmembrane proteins into the mitochondrial inner membrane. Also required for the transfer of beta-barrel precursors from the TOM complex to the sorting and assembly machinery (SAM complex) of the outer membrane. Acts as a chaperone-like protein that protects the hydrophobic precursors from aggregation and guide them through the mitochondrial intermembrane space. This is Mitochondrial import inner membrane translocase subunit Tim8 B (TIMM8B) from Homo sapiens (Human).